Here is a 495-residue protein sequence, read N- to C-terminus: Glutamyl-tRNA(Gln) amidotransferase subunit A (495 aa).

Active-site charge relay system residues include lysine 75 and serine 150. Residue serine 174 is the Acyl-ester intermediate of the active site.

Belongs to the amidase family. GatA subfamily. Heterotrimer of A, B and C subunits.

The catalysed reaction is L-glutamyl-tRNA(Gln) + L-glutamine + ATP + H2O = L-glutaminyl-tRNA(Gln) + L-glutamate + ADP + phosphate + H(+). Allows the formation of correctly charged Gln-tRNA(Gln) through the transamidation of misacylated Glu-tRNA(Gln) in organisms which lack glutaminyl-tRNA synthetase. The reaction takes place in the presence of glutamine and ATP through an activated gamma-phospho-Glu-tRNA(Gln). This is Glutamyl-tRNA(Gln) amidotransferase subunit A from Paraburkholderia xenovorans (strain LB400).